The primary structure comprises 738 residues: Putative RNA-binding protein EEED8.10 (738 aa).

The region spanning 112–201 (RKIVVSNISA…QVMVVSAYVS (90 aa)) is the RRM domain. A disordered region spans residues 211 to 237 (LSDDVGSREDTPLSRASSTQSLASGSE). The segment covering 224-237 (SRASSTQSLASGSE) has biased composition (polar residues). In terms of domain architecture, F-box spans 239-297 (SFNLGNVPDKILRRVISFLPIHETIRLERVNKKFMEESIKSWELVNKIALARETVFNKQ).

This Caenorhabditis elegans protein is Putative RNA-binding protein EEED8.10.